A 417-amino-acid polypeptide reads, in one-letter code: Glutamyl-tRNA(Gln) amidotransferase subunit D (417 aa).

Residues 73–400 (EKVWLLATGG…EEVPRVLTTP (328 aa)) form the Asparaginase/glutaminase domain. Catalysis depends on residues Thr83, Thr157, Asp158, and Lys236.

This sequence belongs to the asparaginase 1 family. GatD subfamily. In terms of assembly, heterodimer of GatD and GatE.

The catalysed reaction is L-glutamyl-tRNA(Gln) + L-glutamine + ATP + H2O = L-glutaminyl-tRNA(Gln) + L-glutamate + ADP + phosphate + H(+). In terms of biological role, allows the formation of correctly charged Gln-tRNA(Gln) through the transamidation of misacylated Glu-tRNA(Gln) in organisms which lack glutaminyl-tRNA synthetase. The reaction takes place in the presence of glutamine and ATP through an activated gamma-phospho-Glu-tRNA(Gln). The GatDE system is specific for glutamate and does not act on aspartate. The sequence is that of Glutamyl-tRNA(Gln) amidotransferase subunit D from Pyrobaculum aerophilum (strain ATCC 51768 / DSM 7523 / JCM 9630 / CIP 104966 / NBRC 100827 / IM2).